Consider the following 349-residue polypeptide: Glycerol-3-phosphate dehydrogenase [NAD(+)], cytoplasmic (349 aa).

NAD(+)-binding positions include 10-15 (GSGNWG), Phe41, and Phe97. Lys120 serves as a coordination point for substrate. Ala153 is an NAD(+) binding site. Position 154 is a phosphoserine (Ser154). The active-site Proton acceptor is Lys204. Arg269 contributes to the NAD(+) binding site. A substrate-binding site is contributed by 269 to 270 (RN). N6-succinyllysine is present on Lys289. Lys296 and Gln298 together coordinate NAD(+). At Tyr326 the chain carries Phosphotyrosine.

This sequence belongs to the NAD-dependent glycerol-3-phosphate dehydrogenase family. As to quaternary structure, homodimer. As to expression, expressed in liver (at protein level).

Its subcellular location is the cytoplasm. It catalyses the reaction sn-glycerol 3-phosphate + NAD(+) = dihydroxyacetone phosphate + NADH + H(+). Its activity is regulated as follows. Inhibited by zinc ions and sulfate. In terms of biological role, has glycerol-3-phosphate dehydrogenase activity. This chain is Glycerol-3-phosphate dehydrogenase [NAD(+)], cytoplasmic, found in Homo sapiens (Human).